Reading from the N-terminus, the 64-residue chain is Large ribosomal subunit protein bL32 (64 aa).

A disordered region spans residues 1 to 64 (MAVQQNRKTR…APKHGDETEE (64 aa)). Residues 7 to 16 (RKTRSKRGMR) show a composition bias toward basic residues.

The protein belongs to the bacterial ribosomal protein bL32 family.

The chain is Large ribosomal subunit protein bL32 from Methylococcus capsulatus (strain ATCC 33009 / NCIMB 11132 / Bath).